We begin with the raw amino-acid sequence, 234 residues long: Sugar fermentation stimulation protein homolog (234 aa).

The protein belongs to the SfsA family.

The sequence is that of Sugar fermentation stimulation protein homolog from Shewanella sp. (strain MR-4).